A 201-amino-acid chain; its full sequence is Holliday junction branch migration complex subunit RuvA (201 aa).

The tract at residues 1 to 63 (MIEFVRGYVD…EDTLALYGFR (63 aa)) is domain I. A domain II region spans residues 64–142 (TREERTLFAK…AVTAKTFPDL (79 aa)). The tract at residues 143–153 (FHLQEESARPH) is flexible linker. Residues 153-201 (HLSALEEAIEALKALGYAEREIQKVVPSLMKENLSTDQYVKRALQQLLK) are domain III.

It belongs to the RuvA family. In terms of assembly, homotetramer. Forms an RuvA(8)-RuvB(12)-Holliday junction (HJ) complex. HJ DNA is sandwiched between 2 RuvA tetramers; dsDNA enters through RuvA and exits via RuvB. An RuvB hexamer assembles on each DNA strand where it exits the tetramer. Each RuvB hexamer is contacted by two RuvA subunits (via domain III) on 2 adjacent RuvB subunits; this complex drives branch migration. In the full resolvosome a probable DNA-RuvA(4)-RuvB(12)-RuvC(2) complex forms which resolves the HJ.

The protein resides in the cytoplasm. In terms of biological role, the RuvA-RuvB-RuvC complex processes Holliday junction (HJ) DNA during genetic recombination and DNA repair, while the RuvA-RuvB complex plays an important role in the rescue of blocked DNA replication forks via replication fork reversal (RFR). RuvA specifically binds to HJ cruciform DNA, conferring on it an open structure. The RuvB hexamer acts as an ATP-dependent pump, pulling dsDNA into and through the RuvAB complex. HJ branch migration allows RuvC to scan DNA until it finds its consensus sequence, where it cleaves and resolves the cruciform DNA. This Geobacillus sp. (strain WCH70) protein is Holliday junction branch migration complex subunit RuvA.